Here is a 316-residue protein sequence, read N- to C-terminus: Nucleotide-binding protein NFA_35930 (316 aa).

32–39 (GLSGAGRG) lines the ATP pocket. Residue 83–86 (DVRS) participates in GTP binding.

It belongs to the RapZ-like family.

Functionally, displays ATPase and GTPase activities. In Nocardia farcinica (strain IFM 10152), this protein is Nucleotide-binding protein NFA_35930.